The following is a 651-amino-acid chain: Acetyl-coenzyme A synthetase (651 aa).

Residues 189–192 (RGGK), threonine 311, and asparagine 335 contribute to the CoA site. ATP is bound by residues 387–389 (GEP), 411–416 (DTWWQT), aspartate 500, and arginine 515. Position 523 (serine 523) interacts with CoA. Residue arginine 526 coordinates ATP. Mg(2+) contacts are provided by valine 537, histidine 539, and valine 542. A CoA-binding site is contributed by arginine 586. Lysine 611 carries the post-translational modification N6-acetyllysine.

Belongs to the ATP-dependent AMP-binding enzyme family. The cofactor is Mg(2+). Post-translationally, acetylated. Deacetylation by the SIR2-homolog deacetylase activates the enzyme.

It catalyses the reaction acetate + ATP + CoA = acetyl-CoA + AMP + diphosphate. Functionally, catalyzes the conversion of acetate into acetyl-CoA (AcCoA), an essential intermediate at the junction of anabolic and catabolic pathways. AcsA undergoes a two-step reaction. In the first half reaction, AcsA combines acetate with ATP to form acetyl-adenylate (AcAMP) intermediate. In the second half reaction, it can then transfer the acetyl group from AcAMP to the sulfhydryl group of CoA, forming the product AcCoA. This is Acetyl-coenzyme A synthetase from Brucella abortus (strain S19).